Consider the following 760-residue polypeptide: ATP-dependent zinc metalloprotease FtsH (760 aa).

At 1–5 the chain is on the cytoplasmic side; that stretch reads MNRKN. Residues 6–26 form a helical membrane-spanning segment; the sequence is VTRTITAIAVVVLLGWSFFYF. The Extracellular segment spans residues 27 to 110; sequence SDDTRGYKPV…KVSTVVNQGS (84 aa). A helical transmembrane segment spans residues 111-131; the sequence is ILGELLVYVLPLLLLVGLFVM. Residues 132–760 are Cytoplasmic-facing; it reads FSRMQGGARM…EVSRTKPAHG (629 aa). 203-210 lines the ATP pocket; the sequence is GPPGTGKT. Histidine 425 contributes to the Zn(2+) binding site. Glutamate 426 is a catalytic residue. Zn(2+) contacts are provided by histidine 429 and aspartate 501. A disordered region spans residues 616-760; sequence DFGGRIPSDK…EVSRTKPAHG (145 aa). A compositionally biased stretch (low complexity) spans 650–669; sequence AFKAAIAQATQAAEAARSDA. Residues 740-750 are compositionally biased toward acidic residues; that stretch reads GSDESSAEQDD.

In the central section; belongs to the AAA ATPase family. It in the C-terminal section; belongs to the peptidase M41 family. Homohexamer. Requires Zn(2+) as cofactor.

Its subcellular location is the cell membrane. Its function is as follows. Acts as a processive, ATP-dependent zinc metallopeptidase for both cytoplasmic and membrane proteins. Plays a role in the quality control of integral membrane proteins. The protein is ATP-dependent zinc metalloprotease FtsH of Mycobacterium bovis (strain ATCC BAA-935 / AF2122/97).